Here is a 154-residue protein sequence, read N- to C-terminus: Probable deoxyuridine 5'-triphosphate nucleotidohydrolase (154 aa).

Belongs to the dCTP deaminase family. Archaeal dUTPase subfamily.

It carries out the reaction dUTP + H2O = dUMP + diphosphate + H(+). It participates in pyrimidine metabolism; dUMP biosynthesis; dUMP from dCTP (dUTP route): step 2/2. In terms of biological role, this enzyme is involved in nucleotide metabolism: it produces dUMP, the immediate precursor of thymidine nucleotides and it decreases the intracellular concentration of dUTP so that uracil cannot be incorporated into DNA. The polypeptide is Probable deoxyuridine 5'-triphosphate nucleotidohydrolase (Methanopyrus kandleri (strain AV19 / DSM 6324 / JCM 9639 / NBRC 100938)).